We begin with the raw amino-acid sequence, 335 residues long: Rho guanine nucleotide exchange factor 39 (335 aa).

The region spanning 22–197 (KRACTARELL…SETAQRVHTI (176 aa)) is the DH domain. Positions 227 to 331 (WFLRQGWLLV…WYHSLTWAIS (105 aa)) constitute a PH domain.

Strongly expressed in hepatocellular carcinoma (HCC) compared with their non-cancerous counterparts.

It is found in the cell membrane. Promotes cell proliferation. The chain is Rho guanine nucleotide exchange factor 39 (ARHGEF39) from Homo sapiens (Human).